Reading from the N-terminus, the 203-residue chain is Guanylate kinase (203 aa).

In terms of domain architecture, Guanylate kinase-like spans 5–184; sequence GMLIVLSGPS…AVQRIEKIIE (180 aa). 12-19 contributes to the ATP binding site; it reads GPSGVGKG.

This sequence belongs to the guanylate kinase family.

Its subcellular location is the cytoplasm. It catalyses the reaction GMP + ATP = GDP + ADP. In terms of biological role, essential for recycling GMP and indirectly, cGMP. In Latilactobacillus sakei subsp. sakei (strain 23K) (Lactobacillus sakei subsp. sakei), this protein is Guanylate kinase.